A 229-amino-acid chain; its full sequence is UPF0173 metal-dependent hydrolase SAB1566c (229 aa).

The protein belongs to the UPF0173 family.

The chain is UPF0173 metal-dependent hydrolase SAB1566c from Staphylococcus aureus (strain bovine RF122 / ET3-1).